The chain runs to 306 residues: Tyrosine recombinase XerC (306 aa).

Positions M1–Y90 constitute a Core-binding (CB) domain. The Tyr recombinase domain maps to R111 to R298. Residues R151, K175, H250, R253, and H276 contribute to the active site. Y285 acts as the O-(3'-phospho-DNA)-tyrosine intermediate in catalysis.

It belongs to the 'phage' integrase family. XerC subfamily. As to quaternary structure, forms a cyclic heterotetrameric complex composed of two molecules of XerC and two molecules of XerD.

The protein localises to the cytoplasm. Site-specific tyrosine recombinase, which acts by catalyzing the cutting and rejoining of the recombining DNA molecules. The XerC-XerD complex is essential to convert dimers of the bacterial chromosome into monomers to permit their segregation at cell division. It also contributes to the segregational stability of plasmids. The protein is Tyrosine recombinase XerC of Pelotomaculum thermopropionicum (strain DSM 13744 / JCM 10971 / SI).